A 396-amino-acid polypeptide reads, in one-letter code: 3-hydroxykynurenine transaminase (396 aa).

Residues 43–44 are binds to and confers specificity for 3-hydroxykynurenine; shared with dimeric partner; sequence SN. Residues 77 to 79, S154, and Q204 contribute to the pyridoxal 5'-phosphate site; that span reads SAH. S154 is a substrate binding site. The residue at position 205 (K205) is an N6-(pyridoxal phosphate)lysine. Y256 and T259 together coordinate pyridoxal 5'-phosphate. R356 is a binding site for substrate.

It belongs to the class-V pyridoxal-phosphate-dependent aminotransferase family. As to quaternary structure, homodimer. The cofactor is pyridoxal 5'-phosphate. As to expression, expressed in gut and ovaries.

It is found in the peroxisome. The catalysed reaction is L-kynurenine + glyoxylate = kynurenate + glycine + H2O. It carries out the reaction 3-hydroxy-L-kynurenine + glyoxylate = xanthurenate + glycine + H2O. The enzyme catalyses 3-hydroxy-L-kynurenine + pyruvate = xanthurenate + L-alanine + H2O. It catalyses the reaction glyoxylate + L-alanine = glycine + pyruvate. Its pathway is amino-acid degradation; L-kynurenine degradation; kynurenate from L-kynurenine: step 1/2. Its function is as follows. Catalyzes the pyridoxal 5'-phosphate-dependent transamination of both 3-hydroxykynurenine and L-kynurenine to xanthurenic acid and kynurenic acid, respectively, preferentially using the alpha-ketoacid glyoxylate as the amino group acceptor. Although glyoxylate is the preferred amino group acceptor, transamination of 3-hydroxykynurenine also works with pyruvate as the amino acceptor in vitro. Involved in the detoxification of cytotoxic metabolite 3-hydroxykynurenine generated by the hydroxylation of L-kynurenine, an intermediate in the tryptophan catabolism pathway. The Plasmodium parasite uses xanthurenic acid produced in the midgut to activate its gametocytes ingested during a blood meal. Also catalyzes, although with a lesser efficiency, the transamination of alanine with glyoxylate as an amino group acceptor. May play a role in the detoxification of glyoxylate, a toxic plant metabolite from the diet. The polypeptide is 3-hydroxykynurenine transaminase (Anopheles gambiae (African malaria mosquito)).